A 331-amino-acid polypeptide reads, in one-letter code: Type 2 lactosamine alpha-2,3-sialyltransferase (331 aa).

Over 1-4 (MRGY) the chain is Cytoplasmic. A helical; Signal-anchor for type II membrane protein transmembrane segment spans residues 5–25 (LVAIFLSAVFLYYVLHCILWG). Residues 26–331 (TNVYWVAPVE…KNLVINLTQD (306 aa)) are Lumenal-facing. 6 N-linked (GlcNAc...) asparagine glycosylation sites follow: asparagine 129, asparagine 181, asparagine 282, asparagine 295, asparagine 308, and asparagine 327.

This sequence belongs to the glycosyltransferase 29 family. Ubiquitous.

It is found in the golgi apparatus membrane. It catalyses the reaction a neolactoside nLc4Cer(d18:1(4E)) + CMP-N-acetyl-beta-neuraminate = a neolactoside IV(3)-alpha-NeuAc-nLc4Cer(d18:1(4E)) + CMP + H(+). It carries out the reaction a beta-D-galactosyl-(1-&gt;4)-N-acetyl-beta-D-glucosaminyl derivative + CMP-N-acetyl-beta-neuraminate = an N-acetyl-alpha-neuraminyl-(2-&gt;3)-beta-D-galactosyl-(1-&gt;4)-N-acetyl-beta-D-glucosaminyl derivative + CMP + H(+). The enzyme catalyses a neolactoside nLc6Cer(d18:1(4E)) + CMP-N-acetyl-beta-neuraminate = a neolactoside VI(3)-alpha-NeuNAc-nLc6Cer(d18:1(4E)) + CMP + H(+). In terms of biological role, transfers the sialyl residue from CMP-N-acetyl-beta-neuraminate to the terminal galactose residue on sugar chains of glycoproteins and glycolipids. It's alpha-2,3-sialyltransferase activity is specific toward type II glycan chains (Galbeta1-4GlcNAc) on glycoproteins and glycolipids such as neolactosides nLc4Cer and nLc6Cer, whose sialyl-products serve as precursors for the Lewis X antigen. Critically involved in the synthesis of functional selectin ligands needed for neutrophil recruitment during inflammation and lymphocyte homing to the lymph nodes. This chain is Type 2 lactosamine alpha-2,3-sialyltransferase (ST3GAL6), found in Homo sapiens (Human).